The chain runs to 251 residues: tRNA (guanine-N(1)-)-methyltransferase (251 aa).

S-adenosyl-L-methionine-binding positions include G113 and 133-138; that span reads MGDYVL.

This sequence belongs to the RNA methyltransferase TrmD family. Homodimer.

The protein resides in the cytoplasm. It catalyses the reaction guanosine(37) in tRNA + S-adenosyl-L-methionine = N(1)-methylguanosine(37) in tRNA + S-adenosyl-L-homocysteine + H(+). In terms of biological role, specifically methylates guanosine-37 in various tRNAs. This Sodalis glossinidius (strain morsitans) protein is tRNA (guanine-N(1)-)-methyltransferase.